Here is a 194-residue protein sequence, read N- to C-terminus: Phosphoheptose isomerase (194 aa).

The SIS domain occupies 37-194; sequence IAKSFKNKNK…IIEKEMKKIN (158 aa). 52 to 54 is a substrate binding site; it reads NGG. The Zn(2+) site is built by His-61 and Glu-65. Residues Glu-65, 93 to 94, 119 to 121, Ser-124, and Gln-172 each bind substrate; these read ND and STS. The Zn(2+) site is built by Gln-172 and His-180.

This sequence belongs to the SIS family. GmhA subfamily. Homotetramer. Zn(2+) serves as cofactor.

The protein localises to the cytoplasm. The enzyme catalyses 2 D-sedoheptulose 7-phosphate = D-glycero-alpha-D-manno-heptose 7-phosphate + D-glycero-beta-D-manno-heptose 7-phosphate. It participates in carbohydrate biosynthesis; D-glycero-D-manno-heptose 7-phosphate biosynthesis; D-glycero-alpha-D-manno-heptose 7-phosphate and D-glycero-beta-D-manno-heptose 7-phosphate from sedoheptulose 7-phosphate: step 1/1. In terms of biological role, catalyzes the isomerization of sedoheptulose 7-phosphate in D-glycero-D-manno-heptose 7-phosphate. This chain is Phosphoheptose isomerase, found in Buchnera aphidicola subsp. Schizaphis graminum (strain Sg).